A 245-amino-acid polypeptide reads, in one-letter code: 5'-nucleotidase SurE (245 aa).

The a divalent metal cation site is built by Asp-8, Asp-9, Ser-39, and Asn-91.

Belongs to the SurE nucleotidase family. A divalent metal cation serves as cofactor.

The protein localises to the cytoplasm. It catalyses the reaction a ribonucleoside 5'-phosphate + H2O = a ribonucleoside + phosphate. Its function is as follows. Nucleotidase that shows phosphatase activity on nucleoside 5'-monophosphates. In Herminiimonas arsenicoxydans, this protein is 5'-nucleotidase SurE.